The sequence spans 156 residues: Oxidized purine nucleoside triphosphate hydrolase (156 aa).

A Nudix hydrolase domain is found at 3–132; it reads TSRLYTLVLV…WFPLLLQKKK (130 aa). A 2-oxo-dATP-binding site is contributed by threonine 8. Residues threonine 8, lysine 23, asparagine 33, 35 to 38, and glutamate 52 contribute to the 8-oxo-dGTP site; that span reads FGGK. Residues asparagine 33 and 35–38 each bind 2-oxo-dATP; that span reads FGGK. Mg(2+) is bound by residues glycine 36, glutamate 52, glutamate 55, glutamate 56, and glutamate 100. The Nudix box signature appears at 37–58; the sequence is GKVQEGETIEDGAKRELLEESG. Residues glutamate 56, glutamate 100, and 117–120 each bind 8-oxo-dGTP; that span reads WPDD. Position 117–120 (117–120) interacts with 2-oxo-dATP; it reads WPDD.

This sequence belongs to the Nudix hydrolase family. In terms of assembly, monomer. The cofactor is Mg(2+). In terms of tissue distribution, high expression levels detected in thymus, liver, spleen, kidney, testis and large intestine, with lower levels detected in brain, heart, lung and stomach (at protein level). Expressed in kidney, liver and small intestine.

It localises to the cytoplasm. Its subcellular location is the nucleus. The protein localises to the nucleus membrane. It is found in the cytoplasmic vesicle. The protein resides in the secretory vesicle. It localises to the acrosome. The catalysed reaction is 2-oxo-dATP + H2O = 2-oxo-dAMP + diphosphate + H(+). It carries out the reaction 2-oxo-ATP + H2O = 2-oxo-AMP + diphosphate + H(+). The enzyme catalyses 8-oxo-dGTP + H2O = 8-oxo-dGMP + diphosphate + H(+). It catalyses the reaction 8-oxo-dATP + H2O = 8-oxo-dAMP + diphosphate + H(+). The catalysed reaction is O(6)-methyl-dGTP + H2O = O(6)-methyl-dGMP + diphosphate + H(+). It carries out the reaction N(6)-methyl-dATP + H2O = N(6)-methyl-dAMP + diphosphate + H(+). The enzyme catalyses N(6)-methyl-ATP + H2O = N(6)-methyl-AMP + diphosphate + H(+). In terms of biological role, oxidized purine nucleoside triphosphate hydrolase which is a prominent sanitizer of the oxidized nucleotide pool. Catalyzes the hydrolysis of 2-oxo-dATP (2-hydroxy-dATP) into 2-oxo-dAMP. Also has a significant hydrolase activity toward 2-oxo-ATP, 8-oxo-dGTP and 8-oxo-dATP. Through the hydrolysis of oxidized purine nucleoside triphosphates, prevents their incorporation into DNA and the subsequent transversions A:T to C:G and G:C to T:A. Also catalyzes the hydrolysis of methylated purine nucleoside triphosphate preventing their integration into DNA. Through this antimutagenic activity protects cells from oxidative stress. This Mus musculus (Mouse) protein is Oxidized purine nucleoside triphosphate hydrolase (Nudt1).